The primary structure comprises 1340 residues: TSET complex member tstE (1340 aa).

The segment covering 56 to 67 (NQSQTSPNSNDG) has biased composition (low complexity). 2 disordered regions span residues 56–75 (NQSQTSPNSNDGNIGGGSGG) and 110–131 (SGSGGGGSGSNSNIGGGGGGGQ). 4 WD repeats span residues 208–246 (VNQILFNCLCFHPKSPILYAAIRNEVHFYDIITKSVIGK), 250–294 (DPTE…LQTI), 345–384 (GHKKPISAIAHHPAKTILASCSTDGQLKIWDTRNNMSFLN), and 397–436 (IEHSNHYFLVFEPTGKYLVMTGSSGLTLVYGDLTSQNPQE). The span at 1216 to 1251 (KSHMSSTTTLRRSPSIENIRTTSTTFDSSKFNTDNQ) shows a compositional bias: polar residues. Residues 1216 to 1340 (KSHMSSTTTL…TPTPTTTLSS (125 aa)) form a disordered region. Residues 1252-1275 (ELFDDDSDDDSDSGADADVDSENE) show a composition bias toward acidic residues. Residues 1286–1318 (ASLQHNDNSSLTNITVTDNDSNLDQDITSNTGS) show a composition bias toward polar residues. Over residues 1328–1340 (LSSTPTPTTTLSS) the composition is skewed to low complexity.

As to quaternary structure, component of the TSET complex, a heterohexamer composed of tstA, tstB, tstC, tstD, tstE and tstF, which may act in plasma membrane turnover. tstA, tstB, tstC and tstD are likely to be the core complex members with tstE and tstF acting as associated scaffold proteins.

This chain is TSET complex member tstE, found in Dictyostelium discoideum (Social amoeba).